The following is a 261-amino-acid chain: Triosephosphate isomerase (261 aa).

Substrate is bound at residue 10–12; that stretch reads NWK. The Electrophile role is filled by histidine 100. Catalysis depends on glutamate 172, which acts as the Proton acceptor. Substrate contacts are provided by residues glycine 178, serine 218, and 239–240; that span reads GG.

Belongs to the triosephosphate isomerase family. In terms of assembly, homodimer.

It localises to the cytoplasm. The enzyme catalyses D-glyceraldehyde 3-phosphate = dihydroxyacetone phosphate. The protein operates within carbohydrate biosynthesis; gluconeogenesis. Its pathway is carbohydrate degradation; glycolysis; D-glyceraldehyde 3-phosphate from glycerone phosphate: step 1/1. Its function is as follows. Involved in the gluconeogenesis. Catalyzes stereospecifically the conversion of dihydroxyacetone phosphate (DHAP) to D-glyceraldehyde-3-phosphate (G3P). This is Triosephosphate isomerase from Saccharopolyspora erythraea (strain ATCC 11635 / DSM 40517 / JCM 4748 / NBRC 13426 / NCIMB 8594 / NRRL 2338).